Here is a 337-residue protein sequence, read N- to C-terminus: Heat-inducible transcription repressor HrcA (337 aa).

This sequence belongs to the HrcA family.

In terms of biological role, negative regulator of class I heat shock genes (grpE-dnaK-dnaJ and groELS operons). Prevents heat-shock induction of these operons. The sequence is that of Heat-inducible transcription repressor HrcA from Arthrobacter sp. (strain FB24).